A 295-amino-acid chain; its full sequence is Large ribosomal subunit protein uL18 (295 aa).

Over residues proline 251–glycine 261 the composition is skewed to basic and acidic residues. The interval proline 251 to glycine 295 is disordered. The span at lysine 262–methionine 271 shows a compositional bias: basic residues.

It belongs to the universal ribosomal protein uL18 family. In terms of assembly, component of the large ribosomal subunit (LSU).

Its subcellular location is the cytoplasm. The protein localises to the nucleus. Component of the ribosome, a large ribonucleoprotein complex responsible for the synthesis of proteins in the cell. The small ribosomal subunit (SSU) binds messenger RNAs (mRNAs) and translates the encoded message by selecting cognate aminoacyl-transfer RNA (tRNA) molecules. The large subunit (LSU) contains the ribosomal catalytic site termed the peptidyl transferase center (PTC), which catalyzes the formation of peptide bonds, thereby polymerizing the amino acids delivered by tRNAs into a polypeptide chain. The nascent polypeptides leave the ribosome through a tunnel in the LSU and interact with protein factors that function in enzymatic processing, targeting, and the membrane insertion of nascent chains at the exit of the ribosomal tunnel. This Styela clava (Sea squirt) protein is Large ribosomal subunit protein uL18 (RPL5).